A 216-amino-acid chain; its full sequence is Large ribosomal subunit protein uL1 (216 aa).

The protein belongs to the universal ribosomal protein uL1 family. Component of the large ribosomal subunit.

It is found in the cytoplasm. Component of the large ribosomal subunit. The ribosome is a large ribonucleoprotein complex responsible for the synthesis of proteins in the cell. This Ictalurus punctatus (Channel catfish) protein is Large ribosomal subunit protein uL1 (rpl10a).